A 201-amino-acid chain; its full sequence is Adenylyl-sulfate kinase (201 aa).

An ATP-binding site is contributed by 35–42 (GLSGSGKS). Ser-109 functions as the Phosphoserine intermediate in the catalytic mechanism.

This sequence belongs to the APS kinase family.

It carries out the reaction adenosine 5'-phosphosulfate + ATP = 3'-phosphoadenylyl sulfate + ADP + H(+). It functions in the pathway sulfur metabolism; hydrogen sulfide biosynthesis; sulfite from sulfate: step 2/3. In terms of biological role, catalyzes the synthesis of activated sulfate. This Escherichia coli (strain ATCC 8739 / DSM 1576 / NBRC 3972 / NCIMB 8545 / WDCM 00012 / Crooks) protein is Adenylyl-sulfate kinase.